A 398-amino-acid polypeptide reads, in one-letter code: Phosphoglycerate kinase (398 aa).

Substrate contacts are provided by residues aspartate 23–asparagine 25, arginine 38, histidine 61–lysine 64, arginine 122, and arginine 155. ATP is bound by residues lysine 206, glycine 297, glutamate 328, and glycine 354–serine 357.

It belongs to the phosphoglycerate kinase family. Monomer.

The protein resides in the cytoplasm. The catalysed reaction is (2R)-3-phosphoglycerate + ATP = (2R)-3-phospho-glyceroyl phosphate + ADP. It participates in carbohydrate degradation; glycolysis; pyruvate from D-glyceraldehyde 3-phosphate: step 2/5. This Clostridium novyi (strain NT) protein is Phosphoglycerate kinase.